The following is a 200-amino-acid chain: Transcription factor FapR (200 aa).

The protein belongs to the FapR family.

Functionally, transcriptional factor involved in regulation of membrane lipid biosynthesis by repressing genes involved in fatty acid and phospholipid metabolism. This Caldanaerobacter subterraneus subsp. tengcongensis (strain DSM 15242 / JCM 11007 / NBRC 100824 / MB4) (Thermoanaerobacter tengcongensis) protein is Transcription factor FapR.